A 335-amino-acid chain; its full sequence is MGRLILEHTLQGHKGRIWGVAWHPKGNVFASCGEDKAIRIWSLTGNTWSTKTILSDGHKRTIREIRWSPCGQYLASASFDATTAIWSKSSGEFECNATLEGHENEVKSVSWSRSGGLLATCSRDKSVWIWEVAGDDEFECAAVLNPHTQDVKRVVWHPTKDILASASYDNTIKMFAEEPIDNDWDCTATLTSHTSTVWGIDFDADGERLVSCSDDTTIKIWRAYHPGNTAGVATPDQQTVWKCVCTVSGQHSRAIYDVSWCKLTGLIATACGDDGIRIFKESSDSKPDEPTFEQITAEEGAHDQDVNSVQWNPVVAGQLISCSDDGTIKIWKVTE.

7 WD repeats span residues 12–51, 57–96, 101–140, 146–185, 192–231, 250–289, and 301–335; these read GHKG…WSTK, GHKR…FECN, GHEN…EFEC, PHTQ…NDWD, SHTS…NTAG, QHSR…KPDE, and AHDQ…KVTE.

It belongs to the WD repeat CIA1 family. In terms of processing, conjugated to URM1, a ubiquitin-like protein.

Functionally, essential component of the cytosolic iron-sulfur (Fe/S) protein assembly machinery. Required for the maturation of extramitochondrial Fe/S proteins. This Drosophila melanogaster (Fruit fly) protein is Probable cytosolic iron-sulfur protein assembly protein Ciao1.